The sequence spans 698 residues: Voltage-dependent calcium channel beta subunit-associated regulatory protein (698 aa).

Over 1–41 (MQPTATMATAAATTATVALTTSWDNATSRPTAEPDPILDNY) the chain is Extracellular. Residue N25 is glycosylated (N-linked (GlcNAc...) asparagine). Residues 42–62 (VLLVVVMSLFVGGTLVVLSGV) traverse the membrane as a helical; Signal-anchor for type III membrane protein segment. Over 63–698 (LLLCKRCWEV…APTSPDHSPA (636 aa)) the chain is Cytoplasmic. 2 disordered regions span residues 90 to 124 (YLDNGTHPIQDPDCRGEDPEGQDTETERFLATSST) and 185 to 275 (ASAA…SSGS). A compositionally biased stretch (low complexity) spans 185–197 (ASAAATPHPATTS). Residues S290 and S295 each carry the phosphoserine modification. Disordered regions lie at residues 308–339 (SQRASSLDTRGSPKRHHFQRQRAASESMEQEG), 360–421 (PPPR…HAQC), 438–536 (ATAS…RRDY), and 554–648 (PHFD…GSGL). A compositionally biased stretch (pro residues) spans 360–375 (PPPRPFLASPTSPPPT). The span at 402–413 (PEHAQQQDPQQE) shows a compositional bias: low complexity. A compositionally biased stretch (gly residues) spans 459–468 (SGSGSGGGGA). Positions 471–482 (AFPPPPESPPAL) are enriched in pro residues. Basic and acidic residues predominate over residues 483 to 493 (RPKDGEARRLL). S501, S520, and S524 each carry phosphoserine. Residues 562–576 (HRTRAHPHTHARKQW) are compositionally biased toward basic residues. At S610 the chain carries Phosphoserine. T691 is modified (phosphothreonine). S692 and S696 each carry phosphoserine.

In terms of assembly, interacts with voltage-dependent calcium channels CACNB1, CACNB2, CACNB3 and CACNB4 beta subunits; prevents their interaction with the CACNA1C alpha subunit thereby negatively regulating the activity of the corresponding calcium channels. In terms of tissue distribution, expressed by neurons in the cortex, cerebellum and hippocampus and by pancreatic beta cells (at protein level).

The protein resides in the cytoplasmic vesicle. It is found in the secretory vesicle. Its subcellular location is the synaptic vesicle membrane. It localises to the cell membrane. The protein localises to the cell projection. The protein resides in the growth cone. Negatively regulates voltage-gated calcium channels by preventing the interaction between their alpha and beta subunits. Thereby, negatively regulates calcium channels activity at the plasma membrane and indirectly inhibits calcium-regulated exocytosis. The protein is Voltage-dependent calcium channel beta subunit-associated regulatory protein of Mus musculus (Mouse).